We begin with the raw amino-acid sequence, 354 residues long: MAKLLLLTLLGASLAFVGERLLAFRNSFGAVQELEPVEPQNCVLIEGLENGSEDIDILPSGLAFISSGLKYPGMPNFAPDEPGKIFLIDMNEKNPRAQELEISNGFEKESFNPHGISTFIDKDHTVYLYVVNHPHMKSTVEIFKFEEQQRSLVHLKTIKHELLKSVNNIVVLGPEQFYATRDHYFTNYVLALLEMFLDLHWTSVLFYSPKEVKVVAKGFSSANGITVSLDKKYVYVADATAKNVHVMEKHDNWDLTELKVIHLDTLVDNLSVDPATGDILAGCHPNGMKLLNYNPEDPPGSEVLRIQNVLSEKPRVSTVYTNDGSVLQGSTVASVYQGKILIGTIFHKTLYCVL.

Cys42 and Cys352 are oxidised to a cystine. The N-linked (GlcNAc...) asparagine glycan is linked to Asn50. Ca(2+) is bound by residues Glu53 and Asp54. Residue His114 is the Proton acceptor of the active site. Residue Ile116 participates in Ca(2+) binding. Ser165 is subject to Phosphoserine. Asn167, Asn168, Asn223, Asp268, and Asn269 together coordinate Ca(2+). Asn269 is a glycosylation site (N-linked (GlcNAc...) asparagine).

It belongs to the paraoxonase family. As to quaternary structure, homodimer. Ca(2+) serves as cofactor. Post-translationally, glycosylated. In terms of processing, the signal sequence is not cleaved.

Its subcellular location is the secreted. It localises to the extracellular space. The catalysed reaction is a phenyl acetate + H2O = a phenol + acetate + H(+). The enzyme catalyses An aryl dialkyl phosphate + H2O = dialkyl phosphate + an aryl alcohol.. It carries out the reaction an N-acyl-L-homoserine lactone + H2O = an N-acyl-L-homoserine + H(+). Its function is as follows. Has low activity towards the organophosphate paraxon and aromatic carboxylic acid esters. Rapidly hydrolyzes lactones such as statin prodrugs (e.g. lovastatin). Hydrolyzes aromatic lactones and 5- or 6-member ring lactones with aliphatic substituents but not simple lactones or those with polar substituents. This chain is Serum paraoxonase/lactonase 3 (PON3), found in Oryctolagus cuniculus (Rabbit).